The chain runs to 887 residues: Autotaxin (887 aa).

A signal peptide spans 1 to 27 (MARQGCLGSFQVISLFTFAISVNICLG). Residues 28–35 (FTASRIKR) constitute a propeptide, removed by furin. A glycan (N-linked (GlcNAc...) asparagine) is linked at asparagine 53. SMB domains follow at residues 54–97 (TSGS…LKTA) and 98–142 (RGWE…GESH). 10 disulfide bridges follow: cysteine 58–cysteine 75, cysteine 62–cysteine 93, cysteine 73–cysteine 86, cysteine 79–cysteine 85, cysteine 102–cysteine 119, cysteine 107–cysteine 137, cysteine 117–cysteine 130, cysteine 123–cysteine 129, cysteine 148–cysteine 194, and cysteine 156–cysteine 350. Residues 126 to 128 (RGD) carry the Cell attachment site motif. The interval 144-501 (VDDDCEEIKV…PTFKYRTKVP (358 aa)) is phosphodiesterase. Residues aspartate 171 and threonine 209 each coordinate Zn(2+). Threonine 209 (nucleophile) is an active-site residue. 1-(9Z-octadecenoyl)-sn-glycero-3-phosphate contacts are provided by threonine 209, asparagine 230, and aspartate 311. The 1-hexadecanoyl-sn-glycero-3-phosphate site is built by threonine 209, asparagine 230, and aspartate 311. Threonine 209, asparagine 230, and aspartate 311 together coordinate 1-tetradecanoyl-sn-glycerol 3-phosphate. Zn(2+) is bound by residues aspartate 311, histidine 315, aspartate 358, and histidine 359. 5 disulfide bridges follow: cysteine 366–cysteine 468, cysteine 413–cysteine 830, cysteine 566–cysteine 691, cysteine 568–cysteine 676, and cysteine 799–cysteine 809. Asparagine 398 and asparagine 410 each carry an N-linked (GlcNAc...) asparagine glycan. Histidine 474 provides a ligand contact to Zn(2+). Histidine 474 contributes to the 1-(9Z-octadecenoyl)-sn-glycero-3-phosphate binding site. Histidine 474 contacts 1-hexadecanoyl-sn-glycero-3-phosphate. Residue histidine 474 participates in 1-tetradecanoyl-sn-glycerol 3-phosphate binding. Residue asparagine 524 is glycosylated (N-linked (GlcNAc...) asparagine). A compositionally biased stretch (basic and acidic residues) spans 586-607 (HTKGSTEAETGKFRGSKHENKK). The tract at residues 586-615 (HTKGSTEAETGKFRGSKHENKKNLNGSVEP) is disordered. Asparagine 610 carries an N-linked (GlcNAc...) asparagine glycan. The tract at residues 622–887 (LYGRPAVLYR…TYLHTYESEI (266 aa)) is nuclease-like domain. Aspartate 764, asparagine 766, aspartate 768, leucine 770, and aspartate 772 together coordinate Ca(2+). Residue asparagine 831 is glycosylated (N-linked (GlcNAc...) asparagine). The required for secretion stretch occupies residues 854–875 (IEHLTGLDFYRKTSRSYSEILT).

Belongs to the nucleotide pyrophosphatase/phosphodiesterase family. The cofactor is Zn(2+). Ca(2+) is required as a cofactor. In terms of processing, N-glycosylation, but not furin-cleavage, plays a critical role on secretion and on lysoPLD activity. Post-translationally, the interdomain disulfide bond between Cys-413 and Cys-830 is essential for catalytic activity. Abundantly expressed in cerebrum and cerebellum. Localized in secretory epithelial cells in the brain and the eye including choroid plexus epithelial cells, ciliary epithelial cells, iris pigment epithelial cells, and retinal pigment cells.

Its subcellular location is the secreted. It catalyses the reaction a 1-O-alkyl-sn-glycero-3-phosphoethanolamine + H2O = a 1-O-alkyl-sn-glycero-3-phosphate + ethanolamine + H(+). The catalysed reaction is a 1-acyl-sn-glycero-3-phosphoethanolamine + H2O = a 1-acyl-sn-glycero-3-phosphate + ethanolamine + H(+). It carries out the reaction 1-(9Z-octadecenoyl)-sn-glycero-3-phosphoethanolamine + H2O = 1-(9Z-octadecenoyl)-sn-glycero-3-phosphate + ethanolamine + H(+). The enzyme catalyses a 1-O-alkyl-sn-glycero-3-phosphocholine + H2O = a 1-O-alkyl-sn-glycero-3-phosphate + choline + H(+). It catalyses the reaction 1-O-(9Z-octadecenyl)-sn-glycero-3-phosphocholine + H2O = 1-O-(9Z-octadecenyl)-sn-glycero-3-phosphate + choline + H(+). The catalysed reaction is 1-O-hexadecyl-sn-glycero-3-phosphocholine + H2O = 1-O-hexadecyl-sn-glycero-3-phosphate + choline + H(+). It carries out the reaction a 1-O-(1Z-alkenyl)-sn-glycero-3-phosphocholine + H2O = a 1-O-(1Z-alkenyl)-sn-glycero-3-phosphate + choline + H(+). The enzyme catalyses a 1-acyl-sn-glycero-3-phosphocholine + H2O = a 1-acyl-sn-glycero-3-phosphate + choline + H(+). It catalyses the reaction 1-dodecanoyl-sn-glycero-3-phosphocholine + H2O = 1-dodecanoyl-sn-glycerol 3-phosphate + choline + H(+). The catalysed reaction is 1-(9Z-octadecenoyl)-sn-glycero-3-phosphocholine + H2O = 1-(9Z-octadecenoyl)-sn-glycero-3-phosphate + choline + H(+). It carries out the reaction 1-tetradecanoyl-sn-glycero-3-phosphocholine + H2O = 1-tetradecanoyl-sn-glycerol 3-phosphate + choline + H(+). The enzyme catalyses 1-decanoyl-sn-glycero-3-phosphocholine + H2O = 1-decanoyl-sn-glycero-3-phosphate + choline + H(+). It catalyses the reaction 1-octadecanoyl-sn-glycero-3-phosphocholine + H2O = 1-octadecanoyl-sn-glycero-3-phosphate + choline + H(+). The catalysed reaction is 1-hexadecanoyl-sn-glycero-3-phosphocholine + H2O = 1-hexadecanoyl-sn-glycero-3-phosphate + choline + H(+). It carries out the reaction 1-hexanoyl-sn-glycero-3-phosphocholine + H2O = 1-hexanoyl-sn-glycero-3-phosphate + choline + H(+). The enzyme catalyses 1-(9Z,12Z)-octadecadienoyl-sn-glycero-3-phosphocholine + H2O = 1-(9Z,12Z)-octadecadienoyl-sn-glycero-3-phosphate + choline + H(+). It catalyses the reaction sphing-4-enine-phosphocholine + H2O = sphing-4-enine 1-phosphate + choline + H(+). The catalysed reaction is 1-(5Z,8Z,11Z,14Z-eicosatetraenoyl)-sn-glycero-3-phosphocholine + H2O = 1-(5Z,8Z,11Z,14Z-eicosatetraenoyl)-sn-glycero-3-phosphate + choline + H(+). It carries out the reaction a 2-acyl-sn-glycero-3-phosphocholine + H2O = a 2-acyl-sn-glycerol 3-phosphate + choline + H(+). The enzyme catalyses a 1,2-diacyl-sn-glycero-3-phosphocholine + H2O = a 1,2-diacyl-sn-glycero-3-phosphate + choline + H(+). It catalyses the reaction 1,2-dioctanoyl-sn-glycero-3-phosphocholine + H2O = 1,2-dioctanoyl-sn-glycero-3-phosphate + choline + H(+). The catalysed reaction is 1,2-didecanoyl-sn-glycero-3-phosphocholine + H2O = 1,2-didecanoyl-sn-glycero-3-phosphate + choline + H(+). It carries out the reaction a 1-acyl-sn-glycero-3-phospho-L-serine + H2O = a 1-acyl-sn-glycero-3-phosphate + L-serine + H(+). The enzyme catalyses 1-(9Z-octadecenoyl)-sn-glycero-3-phospho-L-serine + H2O = 1-(9Z-octadecenoyl)-sn-glycero-3-phosphate + L-serine + H(+). It catalyses the reaction a 2-acyl-sn-glycero-3-phospho-L-serine + H2O = a 2-acyl-sn-glycerol 3-phosphate + L-serine + H(+). With respect to regulation, inhibited by vanadate. Inhibited by micromolar levels of bile salts, such as tauroursodeoxycholate. Not inhibited by taurodeoxycholate. Not inhibited by hydroxysterols, such as 7-hydroxycholesterol, testosterone, dexamethasone and prednisolone. Inhibited by EDTA and EGTA. Its function is as follows. Secreted lysophospholipase D that hydrolyzes lysophospholipids to produce the signaling molecule lysophosphatidic acid (LPA) in extracellular fluids. Its major substrate is lysophosphatidylcholine. Can also act on sphingosylphosphorylcholine producing sphingosine-1-phosphate, a modulator of cell motility. Can hydrolyze, in vitro, bis-pNPP, to some extent pNP-TMP, and barely ATP. Involved in several motility-related processes such as angiogenesis and neurite outgrowth. Acts as an angiogenic factor by stimulating migration of smooth muscle cells and microtubule formation. Stimulates migration of melanoma cells, probably via a pertussis toxin-sensitive G protein. May have a role in induction of parturition. Possible involvement in cell proliferation and adipose tissue development. Required for LPA production in activated platelets, cleaves the sn-1 lysophospholipids to generate sn-1 lysophosphatidic acids containing predominantly 18:2 and 20:4 fatty acids. Shows a preference for the sn-1 to the sn-2 isomer of 1-O-alkyl-sn-glycero-3-phosphocholine (lyso-PAF). This is Autotaxin from Rattus norvegicus (Rat).